The primary structure comprises 171 residues: S-ribosylhomocysteine lyase (171 aa).

Fe cation contacts are provided by H54, H58, and C128.

It belongs to the LuxS family. In terms of assembly, homodimer. Requires Fe cation as cofactor.

The catalysed reaction is S-(5-deoxy-D-ribos-5-yl)-L-homocysteine = (S)-4,5-dihydroxypentane-2,3-dione + L-homocysteine. In terms of biological role, involved in the synthesis of autoinducer 2 (AI-2) which is secreted by bacteria and is used to communicate both the cell density and the metabolic potential of the environment. The regulation of gene expression in response to changes in cell density is called quorum sensing. Catalyzes the transformation of S-ribosylhomocysteine (RHC) to homocysteine (HC) and 4,5-dihydroxy-2,3-pentadione (DPD). This is S-ribosylhomocysteine lyase from Shigella flexneri.